Consider the following 476-residue polypeptide: E1B 55 kDa protein (476 aa).

Disordered regions lie at residues 1–20 (MERP…GNGS) and 42–95 (FGSS…KMEN). 2 positions are modified to phosphoserine: Ser-472 and Ser-473.

It belongs to the adenoviridae E1B 55 kDa protein family. Interacts with host PML-4 and PML-5; this interaction promotes efficient subnuclear targeting of E1B-55K to PML nuclear bodies. Interacts with E4-ORF3 protein. Interacts with E4-ORF6 protein.

It localises to the host nucleus. The protein localises to the host cytoplasm. In terms of biological role, plays a major role to prevent cellular inhibition of viral genome replication. Assembles an SCF-like E3 ubiquitin ligase complex based on the cellular proteins ELOB, ELOC, CUL5 and RBX1, in cooperation with viral E4orf6. This viral RING-type ligase ubiquitinates cellular substrates and targets them to proteasomal degradation: TP53/p53, LIG4, MRE11-RAD50-NBS1 (MRN) complex, ITGA3, DAXX and BLM. E1B-55K probably acts as the substrate-specific adapter of the SCF-like E3 ubiquitin ligase complex. Degradation of host TP53/p53 activity is essential for preventing E1A-induced TP53 accumulation that would otherwise lead to cell apoptosis and growth arrest. E1B-55K also inactivates TP53 transcription-factor activity by binding its transactivation domain. E1B-55K also functions as a SUMO1 E3 ligase for TP53 which causes the latter to be sequestered in promyelocytic leukemia (PML) nuclear bodies thereby contributing to maximal inhibition of TP53 function. In Human adenovirus F serotype 40 (HAdV-40), this protein is E1B 55 kDa protein.